Consider the following 492-residue polypeptide: WD repeat-containing protein JIP5 (492 aa).

5 WD repeats span residues 127-166 (RHKG…VVKK), 178-217 (KKND…LSNS), 236-274 (RSAY…ILIS), 276-317 (DQED…LEDQ), and 365-405 (RNHS…VEEN). Composition is skewed to acidic residues over residues 404 to 414 (ENASVESDSDE) and 422 to 433 (DLSDDTSSDDET). The disordered stretch occupies residues 404-472 (ENASVESDSD…SKSVKKRKIM (69 aa)). Residues 449–462 (KDLKEDHQEEKESN) show a composition bias toward basic and acidic residues.

In terms of assembly, interacts with BUD27 and GIS1.

Its subcellular location is the nucleus. It is found in the nucleolus. The chain is WD repeat-containing protein JIP5 (JIP5) from Saccharomyces cerevisiae (strain ATCC 204508 / S288c) (Baker's yeast).